The primary structure comprises 99 residues: Progonadoliberin-1 (99 aa).

Positions 1–26 are cleaved as a signal peptide; it reads MAAQTFALRLLLVGTLLGTLLGQGCC. At Gln27 the chain carries Pyrrolidone carboxylic acid. Gly36 carries the glycine amide modification.

The protein belongs to the GnRH family.

The protein resides in the secreted. In terms of biological role, stimulates the secretion of gonadotropins. The chain is Progonadoliberin-1 (gnrh1) from Dicentrarchus labrax (European seabass).